Consider the following 206-residue polypeptide: Adenylate kinase (206 aa).

The tract at residues 1 to 21 (MSQPKILLLGAPGAGKGTQSS) is disordered. 13-18 (GAGKGT) is a binding site for ATP. The interval 33-61 (TTGDALRANKDMETEHGTPREFMEAGELV) is NMP. AMP is bound by residues threonine 34, arginine 39, 59–61 (ELV), 84–87 (GYPR), and glutamine 91. The LID stretch occupies residues 120–153 (GRRMDPETGDIYHTEFNMPDDEEVRERLVQRDDD). ATP is bound by residues arginine 121 and 130–131 (IY). Positions 150 and 161 each coordinate AMP. Alanine 189 contacts ATP.

Belongs to the adenylate kinase family. As to quaternary structure, monomer.

It is found in the cytoplasm. It catalyses the reaction AMP + ATP = 2 ADP. It functions in the pathway purine metabolism; AMP biosynthesis via salvage pathway; AMP from ADP: step 1/1. Its function is as follows. Catalyzes the reversible transfer of the terminal phosphate group between ATP and AMP. Plays an important role in cellular energy homeostasis and in adenine nucleotide metabolism. This chain is Adenylate kinase, found in Natronomonas pharaonis (strain ATCC 35678 / DSM 2160 / CIP 103997 / JCM 8858 / NBRC 14720 / NCIMB 2260 / Gabara) (Halobacterium pharaonis).